The sequence spans 261 residues: Putative outer membrane protein TC_0650 (261 aa).

The signal sequence occupies residues 1–17 (MRFLFAFILLCSPWVSE).

It is found in the cell outer membrane. This is Putative outer membrane protein TC_0650 from Chlamydia muridarum (strain MoPn / Nigg).